A 197-amino-acid chain; its full sequence is Ribonuclease HII (197 aa).

The region spanning 11–197 is the RNase H type-2 domain; that stretch reads NLIAGVDEVG…FAPVRKILGL (187 aa). Residues Asp-17, Glu-18, and Asp-109 each coordinate a divalent metal cation.

The protein belongs to the RNase HII family. Mn(2+) is required as a cofactor. Mg(2+) serves as cofactor.

The protein resides in the cytoplasm. It carries out the reaction Endonucleolytic cleavage to 5'-phosphomonoester.. Its function is as follows. Endonuclease that specifically degrades the RNA of RNA-DNA hybrids. The sequence is that of Ribonuclease HII from Haemophilus ducreyi (strain 35000HP / ATCC 700724).